Here is a 97-residue protein sequence, read N- to C-terminus: RNA-binding protein Hfq (97 aa).

The 61-residue stretch at 10–70 (DPFLNALRKE…ISTIVPARSV (61 aa)) folds into the Sm domain. A disordered region spans residues 75-97 (ENRPQAAPASTLVQVETVQQPAE). Residues 85–97 (TLVQVETVQQPAE) show a composition bias toward polar residues.

It belongs to the Hfq family. Homohexamer.

RNA chaperone that binds small regulatory RNA (sRNAs) and mRNAs to facilitate mRNA translational regulation in response to envelope stress, environmental stress and changes in metabolite concentrations. Also binds with high specificity to tRNAs. In Neisseria meningitidis serogroup C / serotype 2a (strain ATCC 700532 / DSM 15464 / FAM18), this protein is RNA-binding protein Hfq.